A 151-amino-acid polypeptide reads, in one-letter code: 3-hydroxyacyl-[acyl-carrier-protein] dehydratase FabZ (151 aa).

His57 is an active-site residue.

The protein belongs to the thioester dehydratase family. FabZ subfamily.

Its subcellular location is the cytoplasm. The catalysed reaction is a (3R)-hydroxyacyl-[ACP] = a (2E)-enoyl-[ACP] + H2O. Functionally, involved in unsaturated fatty acids biosynthesis. Catalyzes the dehydration of short chain beta-hydroxyacyl-ACPs and long chain saturated and unsaturated beta-hydroxyacyl-ACPs. The polypeptide is 3-hydroxyacyl-[acyl-carrier-protein] dehydratase FabZ (Prochlorococcus marinus (strain SARG / CCMP1375 / SS120)).